The following is an 84-amino-acid chain: Toxin NvePTx1 (84 aa).

Positions 1–21 (MFSARLVLVFAVVLCIQLCNA) are cleaved as a signal peptide. The propeptide occupies 22–34 (SWLDERAMTQEKR).

It belongs to the sea anemone type 5 potassium channel toxin family. Contains 4 disulfide bonds. In terms of tissue distribution, in unfertilized eggs and early post-fertilization stages, is expressed uniformly. In gastrulae, the expression becomes spatially-localized and seems to be absent from the oral and aboral poles. In planulae, the expression is clearly observed in the ectoderm in packed gland cells absent from the two body poles, and upon metamorphosis, the expression diminishes. There is two types of gland cells, one large and elongated and another small and round. This toxin is maternally deposited at both protein and RNA levels.

It localises to the secreted. Its subcellular location is the nematocyst. Its function is as follows. Neurotoxin that is probably only defensive. Acts as a voltage-gated potassium channel (Kv) inhibitor. In vivo, induces a rapid increase in swimming speed on zebrafish larvae, as well as death which occurs between 2 and 18 hours later. This is Toxin NvePTx1 from Nematostella vectensis (Starlet sea anemone).